The following is a 314-amino-acid chain: tRNA pseudouridine synthase B (314 aa).

Substrate is bound at residue H43. The active-site Nucleophile is D48. Residues Y76, Y179, and L200 each contribute to the substrate site.

This sequence belongs to the pseudouridine synthase TruB family. Type 1 subfamily.

It catalyses the reaction uridine(55) in tRNA = pseudouridine(55) in tRNA. In terms of biological role, responsible for synthesis of pseudouridine from uracil-55 in the psi GC loop of transfer RNAs. In Shigella flexneri, this protein is tRNA pseudouridine synthase B.